The primary structure comprises 236 residues: SPbeta prophage-derived uncharacterized lipoprotein YokB (236 aa).

Positions 1–19 (MNIRFSMLVCVSFIFFTGG) are cleaved as a signal peptide. Residue Cys-20 is the site of N-palmitoyl cysteine attachment. The S-diacylglycerol cysteine moiety is linked to residue Cys-20. Disordered stretches follow at residues 23–59 (SSAN…TPNM) and 204–236 (VKKV…KDNK). The segment covering 31 to 53 (SKNKNESKEESSEEGVKENDNKL) has biased composition (basic and acidic residues).

It is found in the cell membrane. In Bacillus subtilis (strain 168), this protein is SPbeta prophage-derived uncharacterized lipoprotein YokB (yokB).